Reading from the N-terminus, the 33-residue chain is U1-pseudomyrmecitoxin-Pt1 subunit LS1 (33 aa).

This sequence belongs to the myrmexin family. In terms of assembly, heterodimer composed of subunit LS1 and subunit SS1 (U1-PSDTX-Pt1b), heterodimer composed of subunit LS1 and SS2 (U1-PSDTX-Pt1b), and heterodimer composed of subunit LS1 and SS3; disulfide-linked. In terms of tissue distribution, expressed by the venom gland.

The protein localises to the secreted. Its function is as follows. This heterodimer may have anti-inflammatory properties, since the myrmexin complex (composed of 6 SS-LS heterodimers) inhibits carrageenin-induced edema in a dose-dependent manner (after subcutaneous injection into rats). In Pseudomyrmex triplarinus (Ant), this protein is U1-pseudomyrmecitoxin-Pt1 subunit LS1.